We begin with the raw amino-acid sequence, 290 residues long: Virginiamycin B lyase (290 aa).

His-226 lines the substrate pocket. Glu-265 contributes to the Mg(2+) binding site. The Proton acceptor role is filled by His-267. A Mg(2+)-binding site is contributed by Glu-282.

The protein belongs to the Vgb family. In terms of assembly, monomer. It depends on Mg(2+) as a cofactor.

Inactivates the type B streptogramin antibiotics by linearizing the lactone ring at the ester linkage, generating a free phenylglycine carboxylate and converting the threonyl moiety into 2-amino-butenoic acid. The protein is Virginiamycin B lyase of Mycolicibacterium vanbaalenii (strain DSM 7251 / JCM 13017 / BCRC 16820 / KCTC 9966 / NRRL B-24157 / PYR-1) (Mycobacterium vanbaalenii).